A 363-amino-acid polypeptide reads, in one-letter code: MSVFRSVLGACVLLGSCASSLALAGGAEGLQRVKVDLVAPPLVHPHEQVVSGPPKVVQFRMSIEEKKMVIDDQGTTLQAMTFNGSMPGPTLVVHEGDYIELTLVNPATNSMPHNVDFHAATGALGGAGLTQVVPGQEVVLRFKADRSGTFVYHCAPQGMVPWHVVSGMNGALMVLPRDGLRDPQGKLLHYDRVYTIGESDLYIPKDKDGHYKDYPDLASSYQDTRAVMRTLTPSHVVFNGRVGALTGANALTSKVGESVLFIHSQANRDSRPHLIGGHGDWVWTTGKFANPPQRNMETWFIPGGSAVAALYTFKQPGTYVYLSHNLIEAMELGALAQIKVEGQWDDDLMTQVKAPGPIVEPKQ.

An N-terminal signal peptide occupies residues 1–24 (MSVFRSVLGACVLLGSCASSLALA). Plastocyanin-like domains are found at residues 25 to 193 (GGAE…YDRV) and 194 to 363 (YTIG…EPKQ). Cu cation contacts are provided by histidine 113, histidine 118, histidine 153, cysteine 154, histidine 163, methionine 168, and histidine 324.

It belongs to the multicopper oxidase family. As to quaternary structure, homotrimer. Cu(2+) is required as a cofactor. It depends on Cu(+) as a cofactor. Requires FAD as cofactor.

The protein resides in the periplasm. It catalyses the reaction nitric oxide + Fe(III)-[cytochrome c] + H2O = Fe(II)-[cytochrome c] + nitrite + 2 H(+). The protein operates within nitrogen metabolism; nitrate reduction (denitrification); dinitrogen from nitrate: step 2/4. The polypeptide is Copper-containing nitrite reductase (nirK) (Pseudomonas chlororaphis (Pseudomonas aureofaciens)).